A 454-amino-acid chain; its full sequence is GTPase Der (454 aa).

EngA-type G domains follow at residues 4–168 (PQVA…PEKD) and 178–352 (MKIA…KQAQ). GTP-binding positions include 10 to 17 (GRPNVGKS), 57 to 61 (DTGGM), 120 to 123 (NKAD), 184 to 191 (GRRNVGKS), 231 to 235 (DTPGL), and 296 to 299 (NKWD). Positions 353–437 (SRVSTGELNR…PIKLYMQQRS (85 aa)) constitute a KH-like domain.

This sequence belongs to the TRAFAC class TrmE-Era-EngA-EngB-Septin-like GTPase superfamily. EngA (Der) GTPase family. Associates with the 50S ribosomal subunit.

Functionally, GTPase that plays an essential role in the late steps of ribosome biogenesis. In Rhodopirellula baltica (strain DSM 10527 / NCIMB 13988 / SH1), this protein is GTPase Der.